The primary structure comprises 547 residues: Trigger factor-like protein TIG, Chloroplastic (547 aa).

A chloroplast-targeting transit peptide spans 1-77 (MELCVISTTT…SHGGNFRLFA (77 aa)). Alanine 78 carries the post-translational modification N-acetylalanine. In terms of domain architecture, PPIase FKBP-type spans 271 to 366 (GDLAVVDISA…LFYRDLPTLD (96 aa)).

The protein belongs to the FKBP-type PPIase family. Tig subfamily.

Its subcellular location is the plastid. The protein localises to the chloroplast. The enzyme catalyses [protein]-peptidylproline (omega=180) = [protein]-peptidylproline (omega=0). Its function is as follows. Involved in protein export. Acts as a chaperone by maintaining the newly synthesized protein in an open conformation. Functions as a peptidyl-prolyl cis-trans isomerase. The polypeptide is Trigger factor-like protein TIG, Chloroplastic (TIG) (Arabidopsis thaliana (Mouse-ear cress)).